The primary structure comprises 250 residues: ATP synthase subunit a (250 aa).

The next 5 membrane-spanning stretches (helical) occupy residues 27–47 (TDTVLSTAIAALIVLALAFYL), 83–103 (IAPFVLPLAVTIFVFILISNW), 129–149 (INYVLALALFVFVCYHAAGIW), 191–211 (IFAGGILVALIALFPPYIMWA), and 219–239 (FDLFVGAIQAFIFALLTILYF).

This sequence belongs to the ATPase A chain family. F-type ATPases have 2 components, CF(1) - the catalytic core - and CF(0) - the membrane proton channel. CF(1) has five subunits: alpha(3), beta(3), gamma(1), delta(1), epsilon(1). CF(0) has three main subunits: a(1), b(2) and c(9-12). The alpha and beta chains form an alternating ring which encloses part of the gamma chain. CF(1) is attached to CF(0) by a central stalk formed by the gamma and epsilon chains, while a peripheral stalk is formed by the delta and b chains.

Its subcellular location is the cell membrane. In terms of biological role, key component of the proton channel; it plays a direct role in the translocation of protons across the membrane. This Mycobacterium marinum (strain ATCC BAA-535 / M) protein is ATP synthase subunit a.